Consider the following 214-residue polypeptide: Probable nicotinate-nucleotide adenylyltransferase (214 aa).

The protein belongs to the NadD family.

The enzyme catalyses nicotinate beta-D-ribonucleotide + ATP + H(+) = deamido-NAD(+) + diphosphate. It participates in cofactor biosynthesis; NAD(+) biosynthesis; deamido-NAD(+) from nicotinate D-ribonucleotide: step 1/1. In terms of biological role, catalyzes the reversible adenylation of nicotinate mononucleotide (NaMN) to nicotinic acid adenine dinucleotide (NaAD). The sequence is that of Probable nicotinate-nucleotide adenylyltransferase from Psychromonas ingrahamii (strain DSM 17664 / CCUG 51855 / 37).